We begin with the raw amino-acid sequence, 75 residues long: Small ribosomal subunit protein bS18 (75 aa).

The protein belongs to the bacterial ribosomal protein bS18 family. Part of the 30S ribosomal subunit. Forms a tight heterodimer with protein bS6.

Binds as a heterodimer with protein bS6 to the central domain of the 16S rRNA, where it helps stabilize the platform of the 30S subunit. This Aliivibrio fischeri (strain ATCC 700601 / ES114) (Vibrio fischeri) protein is Small ribosomal subunit protein bS18.